The sequence spans 434 residues: Nicotinate phosphoribosyltransferase (434 aa).

H242 carries the phosphohistidine; by autocatalysis modification.

It belongs to the NAPRTase family. Transiently phosphorylated on a His residue during the reaction cycle. Phosphorylation strongly increases the affinity for substrates and increases the rate of nicotinate D-ribonucleotide production. Dephosphorylation regenerates the low-affinity form of the enzyme, leading to product release.

It carries out the reaction nicotinate + 5-phospho-alpha-D-ribose 1-diphosphate + ATP + H2O = nicotinate beta-D-ribonucleotide + ADP + phosphate + diphosphate. The protein operates within cofactor biosynthesis; NAD(+) biosynthesis; nicotinate D-ribonucleotide from nicotinate: step 1/1. Functionally, catalyzes the synthesis of beta-nicotinate D-ribonucleotide from nicotinate and 5-phospho-D-ribose 1-phosphate at the expense of ATP. This is Nicotinate phosphoribosyltransferase from Bradyrhizobium sp. (strain BTAi1 / ATCC BAA-1182).